The sequence spans 478 residues: BTB/POZ domain-containing protein 17 (478 aa).

Residues Met-1–Ala-28 form the signal peptide. 3 N-linked (GlcNAc...) asparagine glycosylation sites follow: Asn-61, Asn-100, and Asn-195. The region spanning Ser-63–Leu-132 is the BTB domain. The 101-residue stretch at Ala-169 to Gln-269 folds into the BACK domain.

The protein resides in the secreted. The polypeptide is BTB/POZ domain-containing protein 17 (BTBD17) (Homo sapiens (Human)).